The following is a 310-amino-acid chain: MNGLSVSELCCLFCCPPCPGRIAAKLAFLPPEPTYSLVPEPEPGPGGAGAAPSGPLRTSAATPGRWKIHLTERADFQYGQRELDTIEVFVTKSARANRIACMYVRCVPGARYTVLFSHGNAVDLGQMCSFYVGLGTRIGCNIFSYDYSGYGISSGRPSEKNLYADIDAAWQALRTRYGISPDSIILYGQSIGTVPTVDLASRYECAAVVLHSPLTSGMRVAFPDTKKTYCFDAFPNIEKVSKITSPVLIIHGTEDEVIDFSHGLALYERCPKAVEPLWVEGAGHNDIELYSQYLERLRRFISQELPSQRT.

Residues 38–61 are disordered; sequence VPEPEPGPGGAGAAPSGPLRTSAA. Active-site charge relay system residues include Ser190, Asp255, and His284. Ser307 is modified (phosphoserine).

Belongs to the AB hydrolase superfamily. ABHD17 family. Palmitoylated on cysteine residues located in a cysteine cluster at the N-terminus which promotes membrane localization. Palmitoylation is required for post-synaptic localization and for depalmitoylating activity towards DLG4/PSD95. In terms of tissue distribution, expressed in brain (at protein level). Expressed in hippocampal neurons.

It localises to the cell membrane. It is found in the recycling endosome membrane. Its subcellular location is the cell projection. The protein localises to the dendritic spine. The protein resides in the postsynaptic density membrane. The catalysed reaction is S-hexadecanoyl-L-cysteinyl-[protein] + H2O = L-cysteinyl-[protein] + hexadecanoate + H(+). Its function is as follows. Hydrolyzes fatty acids from S-acylated cysteine residues in proteins. Has depalmitoylating activity towards NRAS. Has depalmitoylating activity towards DLG4/PSD95. May have depalmitoylating activity towards MAP6. This Rattus norvegicus (Rat) protein is Alpha/beta hydrolase domain-containing protein 17A.